A 186-amino-acid chain; its full sequence is Ribosome-recycling factor (186 aa).

It belongs to the RRF family.

The protein resides in the cytoplasm. In terms of biological role, responsible for the release of ribosomes from messenger RNA at the termination of protein biosynthesis. May increase the efficiency of translation by recycling ribosomes from one round of translation to another. The protein is Ribosome-recycling factor of Acidovorax ebreus (strain TPSY) (Diaphorobacter sp. (strain TPSY)).